The sequence spans 554 residues: Terpene synthase 17 (554 aa).

3 residues coordinate Mg(2+): D306, D310, and E458. The short motif at 306–310 (DDTYD) is the DDXXD motif element.

This sequence belongs to the terpene synthase family. Tpsa subfamily. The cofactor is Mg(2+). Mn(2+) serves as cofactor.

It catalyses the reaction (2E,6E)-farnesyl diphosphate = (+)-valencene + diphosphate. It carries out the reaction (2E,6E)-farnesyl diphosphate = (E)-beta-farnesene + diphosphate. The enzyme catalyses (2E,6E)-farnesyl diphosphate = gamma-gurjunene + diphosphate. The catalysed reaction is (2Z,6Z)-farnesyl diphosphate = beta-bisabolene + diphosphate. It catalyses the reaction (2Z,6Z)-farnesyl diphosphate = (E)-gamma-bisabolene + diphosphate. It carries out the reaction (2E)-geranyl diphosphate = limonene + diphosphate. The enzyme catalyses (2E)-geranyl diphosphate = beta-myrcene + diphosphate. The catalysed reaction is (2E)-geranyl diphosphate = (E)-beta-ocimene + diphosphate. It catalyses the reaction (2E)-geranyl diphosphate = terpinolene + diphosphate. It carries out the reaction (2E)-geranyl diphosphate = gamma-terpinene + diphosphate. The enzyme catalyses (2Z,6Z)-farnesyl diphosphate = (Z)-gamma-bisabolene + diphosphate. The catalysed reaction is (2E,6E)-farnesyl diphosphate = (1S,5S,6R)-alpha-bergamotene + diphosphate. It catalyses the reaction (2Z,6Z)-farnesyl diphosphate = (1S,5S,6S)-alpha-bergamotene + diphosphate. It functions in the pathway secondary metabolite biosynthesis; terpenoid biosynthesis. In terms of biological role, sesquiterpene synthase involved in the biosynthesis of volatile compounds. Mediates the conversion of (2E,6E)-farnesyl diphosphate (FPP) into gamma-gurjunene, (E)-beta-farnesene and (+)-valencene, and of (2Z,6Z)-farnesyl diphosphate ((ZZ)-FPP) into (E)-alpha-bergamotene and (Z)-gamma-bisabolene as well as beta-bisabolene, (Z)-alpha-bergamotene and (E)-gamma-bisabolene to a lower extent. Can act with a low efficiency as a monoterpene synthase with geranyl diphosphate (GPP) as substrate, thus producing beta-myrcene, (E)-beta-ocimene, limonene, terpinolene, gamma-terpinene and (Z)-beta-ocimene. This is Terpene synthase 17 from Solanum habrochaites (Wild tomato).